A 184-amino-acid chain; its full sequence is ATP synthase subunit b, chloroplastic (184 aa).

Residues leucine 27–leucine 49 traverse the membrane as a helical segment.

This sequence belongs to the ATPase B chain family. As to quaternary structure, F-type ATPases have 2 components, F(1) - the catalytic core - and F(0) - the membrane proton channel. F(1) has five subunits: alpha(3), beta(3), gamma(1), delta(1), epsilon(1). F(0) has four main subunits: a(1), b(1), b'(1) and c(10-14). The alpha and beta chains form an alternating ring which encloses part of the gamma chain. F(1) is attached to F(0) by a central stalk formed by the gamma and epsilon chains, while a peripheral stalk is formed by the delta, b and b' chains.

The protein localises to the plastid. Its subcellular location is the chloroplast thylakoid membrane. Its function is as follows. F(1)F(0) ATP synthase produces ATP from ADP in the presence of a proton or sodium gradient. F-type ATPases consist of two structural domains, F(1) containing the extramembraneous catalytic core and F(0) containing the membrane proton channel, linked together by a central stalk and a peripheral stalk. During catalysis, ATP synthesis in the catalytic domain of F(1) is coupled via a rotary mechanism of the central stalk subunits to proton translocation. In terms of biological role, component of the F(0) channel, it forms part of the peripheral stalk, linking F(1) to F(0). The protein is ATP synthase subunit b, chloroplastic of Lactuca sativa (Garden lettuce).